A 281-amino-acid polypeptide reads, in one-letter code: Phosphatidylserine decarboxylase proenzyme (281 aa).

Residues Asp90, His143, and Ser248 each act as charge relay system; for autoendoproteolytic cleavage activity in the active site. Catalysis depends on Ser248, which acts as the Schiff-base intermediate with substrate; via pyruvic acid; for decarboxylase activity. At Ser248 the chain carries Pyruvic acid (Ser); by autocatalysis.

It belongs to the phosphatidylserine decarboxylase family. PSD-B subfamily. Prokaryotic type I sub-subfamily. As to quaternary structure, heterodimer of a large membrane-associated beta subunit and a small pyruvoyl-containing alpha subunit. Requires pyruvate as cofactor. Is synthesized initially as an inactive proenzyme. Formation of the active enzyme involves a self-maturation process in which the active site pyruvoyl group is generated from an internal serine residue via an autocatalytic post-translational modification. Two non-identical subunits are generated from the proenzyme in this reaction, and the pyruvate is formed at the N-terminus of the alpha chain, which is derived from the carboxyl end of the proenzyme. The autoendoproteolytic cleavage occurs by a canonical serine protease mechanism, in which the side chain hydroxyl group of the serine supplies its oxygen atom to form the C-terminus of the beta chain, while the remainder of the serine residue undergoes an oxidative deamination to produce ammonia and the pyruvoyl prosthetic group on the alpha chain. During this reaction, the Ser that is part of the protease active site of the proenzyme becomes the pyruvoyl prosthetic group, which constitutes an essential element of the active site of the mature decarboxylase.

The protein localises to the cell membrane. The catalysed reaction is a 1,2-diacyl-sn-glycero-3-phospho-L-serine + H(+) = a 1,2-diacyl-sn-glycero-3-phosphoethanolamine + CO2. It participates in phospholipid metabolism; phosphatidylethanolamine biosynthesis; phosphatidylethanolamine from CDP-diacylglycerol: step 2/2. Its function is as follows. Catalyzes the formation of phosphatidylethanolamine (PtdEtn) from phosphatidylserine (PtdSer). The polypeptide is Phosphatidylserine decarboxylase proenzyme (Francisella philomiragia subsp. philomiragia (strain ATCC 25017 / CCUG 19701 / FSC 153 / O#319-036)).